We begin with the raw amino-acid sequence, 363 residues long: UDP-N-acetylglucosamine--N-acetylmuramyl-(pentapeptide) pyrophosphoryl-undecaprenol N-acetylglucosamine transferase (363 aa).

UDP-N-acetyl-alpha-D-glucosamine contacts are provided by residues 12 to 14, N122, R164, S191, I245, and Q290; that span reads TGG.

The protein belongs to the glycosyltransferase 28 family. MurG subfamily.

It localises to the cell membrane. It carries out the reaction di-trans,octa-cis-undecaprenyl diphospho-N-acetyl-alpha-D-muramoyl-L-alanyl-D-glutamyl-meso-2,6-diaminopimeloyl-D-alanyl-D-alanine + UDP-N-acetyl-alpha-D-glucosamine = di-trans,octa-cis-undecaprenyl diphospho-[N-acetyl-alpha-D-glucosaminyl-(1-&gt;4)]-N-acetyl-alpha-D-muramoyl-L-alanyl-D-glutamyl-meso-2,6-diaminopimeloyl-D-alanyl-D-alanine + UDP + H(+). The protein operates within cell wall biogenesis; peptidoglycan biosynthesis. Its function is as follows. Cell wall formation. Catalyzes the transfer of a GlcNAc subunit on undecaprenyl-pyrophosphoryl-MurNAc-pentapeptide (lipid intermediate I) to form undecaprenyl-pyrophosphoryl-MurNAc-(pentapeptide)GlcNAc (lipid intermediate II). This chain is UDP-N-acetylglucosamine--N-acetylmuramyl-(pentapeptide) pyrophosphoryl-undecaprenol N-acetylglucosamine transferase, found in Lawsonia intracellularis (strain PHE/MN1-00).